Reading from the N-terminus, the 340-residue chain is MLSLSKNWNTLIKPNRVAYENFPEINNKAKIVVEPLERGFGLTLGNAMRRVLLSSLQGAAITSIKIPAIEHEFSSIPGVKEDVSEVILNIKGVELKMHVAEKRIMKLKATGPCVVTAGMIETGHDVEILNPDHIICNLAKNKQLEMALTCKVGKGYVLSTNSYEDDLPIGEIAIDALFNPVKSVTYKVENTRVGQVTDYDKLIMFVETNGGLLPEMAVGLAARILQEQLQLFISFEEHEEDKQVKTDTLPFSPYLLKRVDELELSVRSANCLKNDNIIYIGDLVKRTESDMLRTPNFGRKSLNEIKEILAKFNLRFGMDVPDWPPENIQELSKRYEDSYN.

The alpha N-terminal domain (alpha-NTD) stretch occupies residues 1-236 (MLSLSKNWNT…EQLQLFISFE (236 aa)). Residues 251-340 (FSPYLLKRVD…LSKRYEDSYN (90 aa)) are alpha C-terminal domain (alpha-CTD).

It belongs to the RNA polymerase alpha chain family. In terms of assembly, homodimer. The RNAP catalytic core consists of 2 alpha, 1 beta, 1 beta' and 1 omega subunit. When a sigma factor is associated with the core the holoenzyme is formed, which can initiate transcription.

It catalyses the reaction RNA(n) + a ribonucleoside 5'-triphosphate = RNA(n+1) + diphosphate. Its function is as follows. DNA-dependent RNA polymerase catalyzes the transcription of DNA into RNA using the four ribonucleoside triphosphates as substrates. The polypeptide is DNA-directed RNA polymerase subunit alpha (Rickettsia akari (strain Hartford)).